The following is a 335-amino-acid chain: Urokinase plasminogen activator surface receptor (335 aa).

An N-terminal signal peptide occupies residues 1-22 (MGHPPLLPLLLLLHTCVPASWG). 3 consecutive UPAR/Ly6 domains span residues 23 to 114 (LRCM…RSRY), 115 to 213 (LECI…PQNG), and 214 to 305 (RQCY…YRSG). 3 cysteine pairs are disulfide-bonded: C25-C46, C28-C34, and C39-C67. N74 carries an N-linked (GlcNAc...) asparagine glycan. 11 cysteine pairs are disulfide-bonded: C93–C98, C117–C144, C120–C127, C137–C169, C175–C192, C193–C198, C216–C244, C219–C227, C237–C263, C269–C287, and C288–C293. N-linked (GlcNAc...) asparagine glycosylation is present at N124. N-linked (GlcNAc...) asparagine glycans are attached at residues N184, N194, N222, and N255. G305 carries GPI-anchor amidated glycine lipidation. Positions 306-335 (AAPQPGPAHLSLTITLLMTARLWGGTLLWT) are cleaved as a propeptide — removed in mature form.

In terms of assembly, monomer. Interacts (via the UPAR/Ly6 domains) with SRPX2. Interacts with MRC2. Interacts with FAP (seprase); the interaction occurs at the cell surface of invadopodia membrane. Interacts with SORL1 (via N-terminal ectodomain); this interaction decreases PLAUR internalization. The ternary complex composed of PLAUR-PLAU-SERPINE1 also interacts with SORL1. Interacts with CD82; this interaction prevents PLAUR from binding to its high affinity ligand PLAU.

It is found in the cell membrane. The protein localises to the cell projection. It localises to the invadopodium membrane. Functionally, acts as a receptor for urokinase plasminogen activator. Plays a role in localizing and promoting plasmin formation. Mediates the proteolysis-independent signal transduction activation effects of U-PA. It is subject to negative-feedback regulation by U-PA which cleaves it into an inactive form. This chain is Urokinase plasminogen activator surface receptor (PLAUR), found in Pan troglodytes (Chimpanzee).